Consider the following 354-residue polypeptide: UDP-N-acetylglucosamine--N-acetylmuramyl-(pentapeptide) pyrophosphoryl-undecaprenol N-acetylglucosamine transferase (354 aa).

UDP-N-acetyl-alpha-D-glucosamine is bound by residues 11 to 13 (TAG), arginine 164, serine 194, and glutamine 289.

It belongs to the glycosyltransferase 28 family. MurG subfamily.

It localises to the cell membrane. The enzyme catalyses di-trans,octa-cis-undecaprenyl diphospho-N-acetyl-alpha-D-muramoyl-L-alanyl-D-glutamyl-meso-2,6-diaminopimeloyl-D-alanyl-D-alanine + UDP-N-acetyl-alpha-D-glucosamine = di-trans,octa-cis-undecaprenyl diphospho-[N-acetyl-alpha-D-glucosaminyl-(1-&gt;4)]-N-acetyl-alpha-D-muramoyl-L-alanyl-D-glutamyl-meso-2,6-diaminopimeloyl-D-alanyl-D-alanine + UDP + H(+). Its pathway is cell wall biogenesis; peptidoglycan biosynthesis. Functionally, cell wall formation. Catalyzes the transfer of a GlcNAc subunit on undecaprenyl-pyrophosphoryl-MurNAc-pentapeptide (lipid intermediate I) to form undecaprenyl-pyrophosphoryl-MurNAc-(pentapeptide)GlcNAc (lipid intermediate II). In Lachnospira eligens (strain ATCC 27750 / DSM 3376 / VPI C15-48 / C15-B4) (Eubacterium eligens), this protein is UDP-N-acetylglucosamine--N-acetylmuramyl-(pentapeptide) pyrophosphoryl-undecaprenol N-acetylglucosamine transferase.